The sequence spans 621 residues: Very-long-chain aldehyde decarbonylase GL1-5 (621 aa).

5 helical membrane-spanning segments follow: residues 99 to 119 (IILS…GQHL), 126 to 146 (GAGL…YWFH), 186 to 206 (LLFS…IIAF), 224 to 244 (FELV…LMYT), and 332 to 352 (MWPL…SFTV). The Fatty acid hydroxylase domain maps to 138-272 (VEFLYYWFHR…MPFYDYIYNT (135 aa)).

Belongs to the sterol desaturase family. Homodimer.

It is found in the endoplasmic reticulum membrane. The enzyme catalyses a long-chain fatty aldehyde + 2 NADPH + O2 + H(+) = a long-chain alkane + formate + 2 NADP(+) + H2O. In terms of biological role, aldehyde decarbonylase involved in the conversion of aldehydes to alkanes. Core component of a very-long-chain alkane synthesis complex. This is Very-long-chain aldehyde decarbonylase GL1-5 from Oryza sativa subsp. indica (Rice).